Consider the following 173-residue polypeptide: Large ribosomal subunit protein uL10 (173 aa).

Belongs to the universal ribosomal protein uL10 family. Part of the ribosomal stalk of the 50S ribosomal subunit. The N-terminus interacts with L11 and the large rRNA to form the base of the stalk. The C-terminus forms an elongated spine to which L12 dimers bind in a sequential fashion forming a multimeric L10(L12)X complex.

Functionally, forms part of the ribosomal stalk, playing a central role in the interaction of the ribosome with GTP-bound translation factors. The sequence is that of Large ribosomal subunit protein uL10 from Desulfatibacillum aliphaticivorans.